Consider the following 775-residue polypeptide: Dipeptidyl peptidase 4 (775 aa).

Positions 1-15 are cleaved as a signal peptide; that stretch reads MKLLSLLMLAGIAQA. N-linked (GlcNAc...) asparagine glycosylation is found at N81, N111, N170, and N219. Catalysis depends on charge relay system residues S613, D690, and H725.

This sequence belongs to the peptidase S9B family.

It is found in the secreted. The catalysed reaction is Release of an N-terminal dipeptide, Xaa-Yaa-|-Zaa-, from a polypeptide, preferentially when Yaa is Pro, provided Zaa is neither Pro nor hydroxyproline.. Extracellular dipeptidyl-peptidase which removes N-terminal dipeptides sequentially from polypeptides having unsubstituted N-termini provided that the penultimate residue is proline. Contributes to pathogenicity. The polypeptide is Dipeptidyl peptidase 4 (DPP4) (Trichophyton tonsurans (Scalp ringworm fungus)).